The primary structure comprises 388 residues: Succinate--CoA ligase [ADP-forming] subunit beta (388 aa).

Residues lysine 9–histidine 244 form the ATP-grasp domain. Residues lysine 46, glycine 53–glycine 55, glutamate 99, threonine 102, and glutamate 107 contribute to the ATP site. Mg(2+) is bound by residues asparagine 199 and aspartate 213. Residues asparagine 264 and glycine 321 to valine 323 each bind substrate.

It belongs to the succinate/malate CoA ligase beta subunit family. As to quaternary structure, heterotetramer of two alpha and two beta subunits. Requires Mg(2+) as cofactor.

The catalysed reaction is succinate + ATP + CoA = succinyl-CoA + ADP + phosphate. It catalyses the reaction GTP + succinate + CoA = succinyl-CoA + GDP + phosphate. It functions in the pathway carbohydrate metabolism; tricarboxylic acid cycle; succinate from succinyl-CoA (ligase route): step 1/1. Functionally, succinyl-CoA synthetase functions in the citric acid cycle (TCA), coupling the hydrolysis of succinyl-CoA to the synthesis of either ATP or GTP and thus represents the only step of substrate-level phosphorylation in the TCA. The beta subunit provides nucleotide specificity of the enzyme and binds the substrate succinate, while the binding sites for coenzyme A and phosphate are found in the alpha subunit. This Pseudomonas syringae pv. tomato (strain ATCC BAA-871 / DC3000) protein is Succinate--CoA ligase [ADP-forming] subunit beta.